The chain runs to 252 residues: Tumor necrosis factor ligand superfamily member 15 (252 aa).

The Cytoplasmic segment spans residues 1-39 (MAEELGLGFGEAVPVEMLPEGCRHRREARTGLAARSKAC). Residues 40–60 (LALTCCLLSFPILAGLSTLLM) form a helical; Signal-anchor for type II membrane protein membrane-spanning segment. Over 61 to 252 (TGQLRIPGKD…DKTFFGAFLI (192 aa)) the chain is Extracellular. In terms of domain architecture, THD spans 96–252 (PKAHLTIMRQ…DKTFFGAFLI (157 aa)). Asn134 carries an N-linked (GlcNAc...) asparagine glycan. A disulfide bond links Cys163 and Cys203. A glycan (N-linked (GlcNAc...) asparagine) is linked at Asn230.

It belongs to the tumor necrosis factor family. As to quaternary structure, homotrimer.

It localises to the membrane. In terms of biological role, receptor for TNFRSF25 and TNFRSF6B. Mediates activation of NF-kappa-B. Inhibits vascular endothelial growth and angiogenesis (in vitro). Promotes activation of caspases and apoptosis. Promotes splenocyte alloactivation. This is Tumor necrosis factor ligand superfamily member 15 (Tnfsf15) from Rattus norvegicus (Rat).